Reading from the N-terminus, the 630-residue chain is Mesothelin (630 aa).

A signal peptide spans 1–36 (MALPTARPLLGSCGTPALGSLLFLLFSLGWVQPSRT). The N-linked (GlcNAc...) asparagine glycan is linked to Asn-57. Residue Ser-200 is modified to Phosphoserine; by FAM20C. The interval 262–286 (SIPQGIVAAWRQRSSRDPSWRQPER) is required for megakaryocyte-potentiating factor activity. A disulfide bond links Cys-302 and Cys-326. 3 N-linked (GlcNAc...) asparagine glycosylation sites follow: Asn-388, Asn-496, and Asn-523. The GPI-anchor amidated serine moiety is linked to residue Ser-606. Residues 607–630 (GTPCLLGPGPVLTVLALLLASTLA) constitute a propeptide, removed in mature form.

Belongs to the mesothelin family. As to quaternary structure, interacts with MUC16. Both MPF and the cleaved form of mesothelin are N-glycosylated. Post-translationally, proteolytically cleaved by a furin-like convertase to generate megakaryocyte-potentiating factor (MPF), and the cleaved form of mesothelin. Expressed in lung. Expressed at low levels in heart, placenta and kidney. Expressed in mesothelial cells. Highly expressed in mesotheliomas, ovarian cancers, and some squamous cell carcinomas (at protein level).

It is found in the cell membrane. It localises to the golgi apparatus. The protein localises to the secreted. Its function is as follows. Membrane-anchored forms may play a role in cellular adhesion. Functionally, megakaryocyte-potentiating factor (MPF) potentiates megakaryocyte colony formation in vitro. The protein is Mesothelin (MSLN) of Homo sapiens (Human).